Here is a 438-residue protein sequence, read N- to C-terminus: Serine/threonine-protein kinase VIK (438 aa).

The disordered stretch occupies residues 1 to 31; sequence MSSDSPAAGDGGEQAAAGTSVPSPSYDKQKE. ANK repeat units lie at residues 36 to 65, 70 to 99, and 103 to 133; these read SRTS…TLVH, DKRT…DVNA, and WKNT…SYGQ. Residues 162–427 enclose the Protein kinase domain; sequence FSNAAMIGKG…KRLEKIKETL (266 aa). ATP is bound by residues 168-176 and lysine 189; that span reads IGKGSFGEI. Aspartate 285 acts as the Proton acceptor in catalysis.

This sequence belongs to the protein kinase superfamily. Ser/Thr protein kinase family. As to quaternary structure, interacts with BRL2. Binds to MSSP1/TMT1 at the tonoplast. Phosphorylated. In terms of tissue distribution, restricted to mature vascular cells. Mostly expressed in mature leaves and seeds, and, to a lower level, in seedlings, young leaves, flowers and siliques.

It is found in the vacuole. The catalysed reaction is L-seryl-[protein] + ATP = O-phospho-L-seryl-[protein] + ADP + H(+). The enzyme catalyses L-threonyl-[protein] + ATP = O-phospho-L-threonyl-[protein] + ADP + H(+). Its function is as follows. Serine/threonine protein kinase which may function as an adapter protein for BRL2. Required during vascular development for the establishment of vein pattern in foliar organs. Mediates MSSP1/TMT1 phosphorylation and activation to enhance its carrier activity and consequently vacuolar sugar accumulation, particularly in response to cold. This chain is Serine/threonine-protein kinase VIK, found in Arabidopsis thaliana (Mouse-ear cress).